Consider the following 575-residue polypeptide: V-type ATP synthase alpha chain (575 aa).

Residue 238-245 coordinates ATP; it reads GPFGAGKT.

This sequence belongs to the ATPase alpha/beta chains family.

The catalysed reaction is ATP + H2O + 4 H(+)(in) = ADP + phosphate + 5 H(+)(out). Produces ATP from ADP in the presence of a proton gradient across the membrane. The V-type alpha chain is a catalytic subunit. In Borreliella burgdorferi (strain ZS7) (Borrelia burgdorferi), this protein is V-type ATP synthase alpha chain.